A 270-amino-acid chain; its full sequence is Undecaprenyl-diphosphatase 1 (270 aa).

6 consecutive transmembrane segments (helical) span residues 41-61 (IEGFSFELLMNAGSLIAVLLV), 88-108 (FRFIIYLIIATIPAGVIGVLF), 117-137 (KDGVRITAVTLLITGLALFLI), 192-212 (FSFLLYIPVSLGGTILSITDI), 218-238 (LGELFLPYLFAFIASVIATYF), and 250-270 (GNLVYFSIYCFVIGIAVLIFA).

This sequence belongs to the UppP family.

It localises to the cell membrane. It catalyses the reaction di-trans,octa-cis-undecaprenyl diphosphate + H2O = di-trans,octa-cis-undecaprenyl phosphate + phosphate + H(+). Its function is as follows. Catalyzes the dephosphorylation of undecaprenyl diphosphate (UPP). Confers resistance to bacitracin. This Bacillus licheniformis (strain ATCC 14580 / DSM 13 / JCM 2505 / CCUG 7422 / NBRC 12200 / NCIMB 9375 / NCTC 10341 / NRRL NRS-1264 / Gibson 46) protein is Undecaprenyl-diphosphatase 1.